The sequence spans 127 residues: DNA-directed RNA polymerase subunit omega (127 aa).

This sequence belongs to the RNA polymerase subunit omega family. As to quaternary structure, the RNAP catalytic core consists of 2 alpha, 1 beta, 1 beta' and 1 omega subunit. When a sigma factor is associated with the core the holoenzyme is formed, which can initiate transcription.

The enzyme catalyses RNA(n) + a ribonucleoside 5'-triphosphate = RNA(n+1) + diphosphate. Functionally, promotes RNA polymerase assembly. Latches the N- and C-terminal regions of the beta' subunit thereby facilitating its interaction with the beta and alpha subunits. The chain is DNA-directed RNA polymerase subunit omega from Rickettsia rickettsii (strain Iowa).